Here is a 190-residue protein sequence, read N- to C-terminus: Putative manganese efflux pump MntP (190 aa).

6 consecutive transmembrane segments (helical) span residues F3–V23, L37–I57, H72–W88, I111–V131, V138–H158, and F164–V184.

This sequence belongs to the MntP (TC 9.B.29) family.

Its subcellular location is the cell membrane. Probably functions as a manganese efflux pump. This is Putative manganese efflux pump MntP from Corynebacterium glutamicum (strain R).